The sequence spans 318 residues: NADH-ubiquinone oxidoreductase chain 1 (318 aa).

The next 8 membrane-spanning stretches (helical) occupy residues 2-22, 68-88, 100-120, 147-167, 172-192, 217-237, 253-273, and 294-314; these read FMIN…FLTL, ISMF…MWIP, LGVL…LWSG, AIIL…TLII, VWLI…TLAE, AGPF…MNIF, ELYT…FLWI, and LPLT…LSSI.

The protein belongs to the complex I subunit 1 family.

It localises to the mitochondrion inner membrane. The enzyme catalyses a ubiquinone + NADH + 5 H(+)(in) = a ubiquinol + NAD(+) + 4 H(+)(out). Core subunit of the mitochondrial membrane respiratory chain NADH dehydrogenase (Complex I) that is believed to belong to the minimal assembly required for catalysis. Complex I functions in the transfer of electrons from NADH to the respiratory chain. The immediate electron acceptor for the enzyme is believed to be ubiquinone. The polypeptide is NADH-ubiquinone oxidoreductase chain 1 (MT-ND1) (Ovis aries (Sheep)).